A 172-amino-acid chain; its full sequence is Adenine phosphoribosyltransferase (172 aa).

This sequence belongs to the purine/pyrimidine phosphoribosyltransferase family. Homodimer.

It localises to the cytoplasm. The enzyme catalyses AMP + diphosphate = 5-phospho-alpha-D-ribose 1-diphosphate + adenine. Its pathway is purine metabolism; AMP biosynthesis via salvage pathway; AMP from adenine: step 1/1. In terms of biological role, catalyzes a salvage reaction resulting in the formation of AMP, that is energically less costly than de novo synthesis. The sequence is that of Adenine phosphoribosyltransferase from Malacoplasma penetrans (strain HF-2) (Mycoplasma penetrans).